Reading from the N-terminus, the 340-residue chain is Glyceraldehyde-3-phosphate dehydrogenase (340 aa).

Residues 11 to 12 (TI) and G109 contribute to the NAD(+) site. 138–140 (SCN) is a D-glyceraldehyde 3-phosphate binding site. The Nucleophile role is filled by C139. Residue R167 coordinates NAD(+). 193-194 (HA) contacts D-glyceraldehyde 3-phosphate. Q300 serves as a coordination point for NAD(+).

This sequence belongs to the glyceraldehyde-3-phosphate dehydrogenase family. Homotetramer.

The protein localises to the cytoplasm. It catalyses the reaction D-glyceraldehyde 3-phosphate + phosphate + NADP(+) = (2R)-3-phospho-glyceroyl phosphate + NADPH + H(+). It carries out the reaction D-glyceraldehyde 3-phosphate + phosphate + NAD(+) = (2R)-3-phospho-glyceroyl phosphate + NADH + H(+). It functions in the pathway carbohydrate degradation; glycolysis; pyruvate from D-glyceraldehyde 3-phosphate: step 1/5. The chain is Glyceraldehyde-3-phosphate dehydrogenase from Saccharolobus islandicus (strain M.14.25 / Kamchatka #1) (Sulfolobus islandicus).